The chain runs to 68 residues: Antimicrobial peptide VpCT3 (68 aa).

The first 23 residues, 1–23 (MKTQIVILIVAVLVLQLVSQSDA), serve as a signal peptide directing secretion. Leucine 36 bears the Leucine amide mark. The propeptide occupies 37-68 (GKRGLKNLDQYNDLFDGEISDADIKFLQDLMR).

This sequence belongs to the non-disulfide-bridged peptide (NDBP) superfamily. Short antimicrobial peptide (group 4) family. In terms of tissue distribution, expressed by the venom gland.

The protein resides in the secreted. It is found in the target cell membrane. In terms of biological role, antimicrobial peptide with weak activity against all bacteria tested (MIC&gt;100 uM) and all yeasts tested (MIC&gt;200 uM). Also provokes weak hemolysis on human erythrocytes (HC(50)=83.7 uM). The chain is Antimicrobial peptide VpCT3 from Mesomexovis punctatus (Scorpion).